Reading from the N-terminus, the 349-residue chain is D-arabinitol dehydrogenase 1 (349 aa).

Residues C46, H67, C97, C100, C103, C111, and E151 each contribute to the Zn(2+) site.

It belongs to the zinc-containing alcohol dehydrogenase family. Zn(2+) serves as cofactor.

Its subcellular location is the cell projection. The catalysed reaction is D-arabinitol + NADP(+) = D-xylulose + NADPH + H(+). It carries out the reaction D-arabinitol + NADP(+) = D-ribulose + NADPH + H(+). In terms of biological role, D-arabinitol dehydrogenase which mostly produces D-arabinitol in haustoria, the appendages of the parasitic fungus that penetrate the host's tissue and draws nutrients from it. D-arabinitol accumulation may serve as a carbohydrate storage compound. D-arabinitol is also capable of quenching reactive oxygen species involved in host plant defense reactions, thus providing protection for the rust fungus during the pathogenic interaction. This chain is D-arabinitol dehydrogenase 1 (ARD1), found in Uromyces fabae (Rust fungus).